The following is a 314-amino-acid chain: tRNA dimethylallyltransferase (314 aa).

14-21 (GPTASGKT) contacts ATP. Residue 16–21 (TASGKT) coordinates substrate. Interaction with substrate tRNA regions lie at residues 39-42 (DSAQ), 163-167 (QRLQR), and 245-250 (RCVGYR).

This sequence belongs to the IPP transferase family. In terms of assembly, monomer. Mg(2+) serves as cofactor.

The catalysed reaction is adenosine(37) in tRNA + dimethylallyl diphosphate = N(6)-dimethylallyladenosine(37) in tRNA + diphosphate. In terms of biological role, catalyzes the transfer of a dimethylallyl group onto the adenine at position 37 in tRNAs that read codons beginning with uridine, leading to the formation of N6-(dimethylallyl)adenosine (i(6)A). This chain is tRNA dimethylallyltransferase, found in Dechloromonas aromatica (strain RCB).